Consider the following 62-residue polypeptide: Photosystem II reaction center protein Z (62 aa).

2 helical membrane passes run 8 to 28 (ALAALVALSFLMVIGVPVAYA) and 41 to 61 (FVGSIAWTVLVIAVGVLNFFV).

This sequence belongs to the PsbZ family. PSII is composed of 1 copy each of membrane proteins PsbA, PsbB, PsbC, PsbD, PsbE, PsbF, PsbH, PsbI, PsbJ, PsbK, PsbL, PsbM, PsbT, PsbX, PsbY, PsbZ, Psb30/Ycf12, peripheral proteins PsbO, CyanoQ (PsbQ), PsbU, PsbV and a large number of cofactors. It forms dimeric complexes.

The protein localises to the cellular thylakoid membrane. In terms of biological role, may control the interaction of photosystem II (PSII) cores with the light-harvesting antenna, regulates electron flow through the 2 photosystem reaction centers. PSII is a light-driven water plastoquinone oxidoreductase, using light energy to abstract electrons from H(2)O, generating a proton gradient subsequently used for ATP formation. The sequence is that of Photosystem II reaction center protein Z from Picosynechococcus sp. (strain ATCC 27264 / PCC 7002 / PR-6) (Agmenellum quadruplicatum).